A 1391-amino-acid chain; its full sequence is DNA-directed RNA polymerase subunit beta' (1391 aa).

Residues C72, C74, C87, and C90 each coordinate Zn(2+). 3 residues coordinate Mg(2+): D462, D464, and D466. 4 residues coordinate Zn(2+): C816, C890, C897, and C900.

The protein belongs to the RNA polymerase beta' chain family. As to quaternary structure, the RNAP catalytic core consists of 2 alpha, 1 beta, 1 beta' and 1 omega subunit. When a sigma factor is associated with the core the holoenzyme is formed, which can initiate transcription. Requires Mg(2+) as cofactor. It depends on Zn(2+) as a cofactor.

It carries out the reaction RNA(n) + a ribonucleoside 5'-triphosphate = RNA(n+1) + diphosphate. DNA-dependent RNA polymerase catalyzes the transcription of DNA into RNA using the four ribonucleoside triphosphates as substrates. The sequence is that of DNA-directed RNA polymerase subunit beta' from Neisseria meningitidis serogroup B (strain ATCC BAA-335 / MC58).